The following is a 256-amino-acid chain: MVTIDRRVQPIAHLACNHQRAFIDMNESVHHQGSFFGRRKGHKLRAHQADLVDKLLPHLALAIDGPAPASLVELFDPPVEAVRLEIGFGGGEHLIAEALAHPSTGFIGAEPYVNGMAKILARIEQENIRNIRLFAGDAAALMAWVPAHDLNRIDLIHPDPWPKRRHWKRRFVQDAMVGAMARALRANGEFRFVSDIDSYNAWTLAHLLRAPDFDWTAERADDWRKPWPNYTMTRYGRKAEREGRRAAYLRFRRRAA.

S-adenosyl-L-methionine-binding residues include E85, E110, D137, and D159. D159 is an active-site residue. Substrate is bound by residues K163 and D195.

Belongs to the class I-like SAM-binding methyltransferase superfamily. TrmB family.

The enzyme catalyses guanosine(46) in tRNA + S-adenosyl-L-methionine = N(7)-methylguanosine(46) in tRNA + S-adenosyl-L-homocysteine. It participates in tRNA modification; N(7)-methylguanine-tRNA biosynthesis. In terms of biological role, catalyzes the formation of N(7)-methylguanine at position 46 (m7G46) in tRNA. This chain is tRNA (guanine-N(7)-)-methyltransferase, found in Rhodopseudomonas palustris (strain HaA2).